A 464-amino-acid polypeptide reads, in one-letter code: DNA primase DnaG (464 aa).

One can recognise a Toprim domain in the interval 171-245 (DTIIIVEGRA…DIDYVARAPK (75 aa)). Mg(2+) is bound by residues Glu-177, Asp-219, and Asp-221.

Belongs to the archaeal DnaG primase family. In terms of assembly, forms a ternary complex with MCM helicase and DNA. Mg(2+) serves as cofactor.

The catalysed reaction is ssDNA + n NTP = ssDNA/pppN(pN)n-1 hybrid + (n-1) diphosphate.. In terms of biological role, RNA polymerase that catalyzes the synthesis of short RNA molecules used as primers for DNA polymerase during DNA replication. The polypeptide is DNA primase DnaG (Methanococcus aeolicus (strain ATCC BAA-1280 / DSM 17508 / OCM 812 / Nankai-3)).